Consider the following 878-residue polypeptide: Phosphoenolpyruvate carboxylase (878 aa).

Residues His140 and Lys545 contribute to the active site.

The protein belongs to the PEPCase type 1 family. It depends on Mg(2+) as a cofactor.

It catalyses the reaction oxaloacetate + phosphate = phosphoenolpyruvate + hydrogencarbonate. Its function is as follows. Forms oxaloacetate, a four-carbon dicarboxylic acid source for the tricarboxylic acid cycle. The polypeptide is Phosphoenolpyruvate carboxylase (Pseudomonas syringae pv. syringae (strain B728a)).